The following is a 427-amino-acid chain: Kallistatin (427 aa).

A signal peptide spans M1–G20. Residues N33, N108, N157, and N238 are each glycosylated (N-linked (GlcNAc...) asparagine).

This sequence belongs to the serpin family. As to quaternary structure, monomer and some homodimers.

The protein resides in the secreted. Inhibits human amidolytic and kininogenase activities of tissue kallikrein. This is Kallistatin (SERPINA4) from Pongo abelii (Sumatran orangutan).